The chain runs to 250 residues: MGLTTKPLSLKVNAALFDVDGTIIISQPAIAAFWRDFGKDKPYFDAEHVIQVSHGWRTFDAIAKFAPDFANEEYVNKLEAEIPVKYGEKSIEVPGAVKLCNALNALPKEKWAVATSGTRDMAQKWFEHLGIRRPKYFITANDVKQGKPHPEPYLKGRNGLGYPINEQDPSKSKVVVFEDAPAGIAAGKAAGCKIIGIATTFDLDFLKEKGCDIIVKNHESIRVGGYNAETDEVEFIFDDYLYAKDDLLKW.

Residue Asp-18 is the Nucleophile of the active site. Residues Asp-18 and Asp-20 each contribute to the Mg(2+) site. The Proton donor role is filled by Asp-20. Lys-64 is covalently cross-linked (Glycyl lysine isopeptide (Lys-Gly) (interchain with G-Cter in ubiquitin)). Ser-90 is subject to Phosphoserine. Lys-144 participates in a covalent cross-link: Glycyl lysine isopeptide (Lys-Gly) (interchain with G-Cter in ubiquitin). A Mg(2+)-binding site is contributed by Asp-179.

The protein belongs to the HAD-like hydrolase superfamily. DOG/GPP family. Monomer. The cofactor is Mg(2+).

The protein localises to the cytoplasm. The protein resides in the nucleus. It catalyses the reaction sn-glycerol 1-phosphate + H2O = glycerol + phosphate. The catalysed reaction is sn-glycerol 3-phosphate + H2O = glycerol + phosphate. In terms of biological role, glycerol-1-phosphate phosphohydrolase involved in glycerol biosynthesis. Plays a role in osmoadaptation. The chain is Glycerol-1-phosphate phosphohydrolase 2 from Saccharomyces cerevisiae (strain ATCC 204508 / S288c) (Baker's yeast).